Consider the following 417-residue polypeptide: Probable dihydrofolate synthetase (417 aa).

34 to 37 (GKGS) is an ATP binding site. Residues Ser-58, Glu-123, and His-151 each coordinate Mg(2+). Positions 274 and 289 each coordinate ATP.

It belongs to the folylpolyglutamate synthase family.

The enzyme catalyses 7,8-dihydropteroate + L-glutamate + ATP = 7,8-dihydrofolate + ADP + phosphate + H(+). It participates in cofactor biosynthesis; tetrahydrofolylpolyglutamate biosynthesis. Its function is as follows. Glutamate-adding enzyme which catalyzes the binding of the first glutamyl side chain to dihydropteroate. Leads to the de nove synthesis of tetrahydrofolate. de novo. In Schizosaccharomyces pombe (strain 972 / ATCC 24843) (Fission yeast), this protein is Probable dihydrofolate synthetase (fol3).